Here is a 369-residue protein sequence, read N- to C-terminus: Isopentenyl-diphosphate delta-isomerase (369 aa).

Arg9–Lys10 is a binding site for substrate. Residues Thr65, Gly66–Thr68, Ser96, and Asn125 contribute to the FMN site. Ser96 to Arg98 contributes to the substrate binding site. Gln160 serves as a coordination point for substrate. Glu161 is a Mg(2+) binding site. FMN is bound by residues Lys193, Ser218, Thr223, Gly275–Arg277, and Ala296–Leu297.

The protein belongs to the IPP isomerase type 2 family. As to quaternary structure, homooctamer. Dimer of tetramers. FMN serves as cofactor. Requires NADPH as cofactor. Mg(2+) is required as a cofactor.

It localises to the cytoplasm. The enzyme catalyses isopentenyl diphosphate = dimethylallyl diphosphate. Involved in the biosynthesis of isoprenoids. Catalyzes the 1,3-allylic rearrangement of the homoallylic substrate isopentenyl (IPP) to its allylic isomer, dimethylallyl diphosphate (DMAPP). The chain is Isopentenyl-diphosphate delta-isomerase from Sulfurisphaera tokodaii (strain DSM 16993 / JCM 10545 / NBRC 100140 / 7) (Sulfolobus tokodaii).